Here is a 511-residue protein sequence, read N- to C-terminus: GATA zinc finger domain-containing protein 15 (511 aa).

Residues Thr-1–Asn-111 are compositionally biased toward low complexity. 3 disordered regions span residues Thr-1–Phe-194, Asn-214–Lys-313, and Asn-325–Pro-355. A compositionally biased stretch (polar residues) spans Ser-124 to Pro-135. The span at Asn-136–Gln-166 shows a compositional bias: low complexity. A compositionally biased stretch (polar residues) spans Lys-167–His-185. Composition is skewed to low complexity over residues Asn-214–Asn-309 and Ser-337–Pro-351. A GATA-type zinc finger spans residues Cys-453–Cys-478.

In Dictyostelium discoideum (Social amoeba), this protein is GATA zinc finger domain-containing protein 15 (gtaO).